Here is a 115-residue protein sequence, read N- to C-terminus: Ribonuclease P protein component (115 aa).

It belongs to the RnpA family. In terms of assembly, consists of a catalytic RNA component (M1 or rnpB) and a protein subunit.

It catalyses the reaction Endonucleolytic cleavage of RNA, removing 5'-extranucleotides from tRNA precursor.. RNaseP catalyzes the removal of the 5'-leader sequence from pre-tRNA to produce the mature 5'-terminus. It can also cleave other RNA substrates such as 4.5S RNA. The protein component plays an auxiliary but essential role in vivo by binding to the 5'-leader sequence and broadening the substrate specificity of the ribozyme. The polypeptide is Ribonuclease P protein component (Bacillus cereus (strain Q1)).